A 416-amino-acid polypeptide reads, in one-letter code: Adenylosuccinate synthetase (416 aa).

Residues 13-19 and 41-43 each bind GTP; these read GDEGKGK and GHT. Catalysis depends on Asp14, which acts as the Proton acceptor. Asp14 and Gly41 together coordinate Mg(2+). IMP-binding positions include 14–17, 39–42, Thr126, Arg140, Gln220, Thr235, and Arg299; these read DEGK and NAGH. His42 serves as the catalytic Proton donor. Residue 295-301 coordinates substrate; the sequence is VSTGRKR. GTP contacts are provided by residues Arg301, 327-329, and 405-407; these read KLD and STS.

The protein belongs to the adenylosuccinate synthetase family. As to quaternary structure, homodimer. Mg(2+) serves as cofactor.

It is found in the cytoplasm. It catalyses the reaction IMP + L-aspartate + GTP = N(6)-(1,2-dicarboxyethyl)-AMP + GDP + phosphate + 2 H(+). Its pathway is purine metabolism; AMP biosynthesis via de novo pathway; AMP from IMP: step 1/2. Its function is as follows. Plays an important role in the de novo pathway of purine nucleotide biosynthesis. Catalyzes the first committed step in the biosynthesis of AMP from IMP. This is Adenylosuccinate synthetase from Campylobacter jejuni subsp. jejuni serotype O:23/36 (strain 81-176).